We begin with the raw amino-acid sequence, 178 residues long: Ribulose bisphosphate carboxylase small subunit, chloroplastic 2 (178 aa).

The transit peptide at 1–54 (MASISSTVATVSRAAPAQANMVAPFTGLKSNVAFPATKKANDFSTLPSNGGRVQ) directs the protein to the chloroplast.

This sequence belongs to the RuBisCO small chain family. In terms of assembly, heterohexadecamer of 8 large and 8 small subunits.

It is found in the plastid. The protein resides in the chloroplast. Its function is as follows. RuBisCO catalyzes two reactions: the carboxylation of D-ribulose 1,5-bisphosphate, the primary event in carbon dioxide fixation, as well as the oxidative fragmentation of the pentose substrate. Both reactions occur simultaneously and in competition at the same active site. Although the small subunit is not catalytic it is essential for maximal activity. The protein is Ribulose bisphosphate carboxylase small subunit, chloroplastic 2 of Flaveria pringlei.